The sequence spans 285 residues: DNA repair protein RecO (285 aa).

This sequence belongs to the RecO family.

In terms of biological role, involved in DNA repair and RecF pathway recombination. This Synechococcus sp. (strain JA-2-3B'a(2-13)) (Cyanobacteria bacterium Yellowstone B-Prime) protein is DNA repair protein RecO.